A 518-amino-acid polypeptide reads, in one-letter code: 12S seed storage globulin 1 (518 aa).

Positions 1–24 (MATTRFPSLLFYSCIFLLCNGSMA) are cleaved as a signal peptide. Disulfide bonds link C45-C78 and C121-C324. One can recognise a Cupin type-1 1 domain in the interval 50-240 (LQAFEPLRQV…ALGISQQAAQ (191 aa)). Low complexity predominate over residues 281–295 (QSQQEQSTQYQVGQS). The disordered stretch occupies residues 281–311 (QSQQEQSTQYQVGQSPQYQEGQSTQYQSGQS). Over residues 296–311 (PQYQEGQSTQYQSGQS) the composition is skewed to polar residues. A Cupin type-1 2 domain is found at 330–479 (QNIENPKRAD…AYRISRQESQ (150 aa)). The disordered stretch occupies residues 496-518 (FAQTGSQSYQDEGESSSTEKASE).

The protein belongs to the 11S seed storage protein (globulins) family. As to quaternary structure, hexamer; each subunit is composed of an acidic and a basic chain derived from a single precursor and linked by a disulfide bond.

Functionally, this is a seed storage protein. In Avena sativa (Oat), this protein is 12S seed storage globulin 1.